A 341-amino-acid chain; its full sequence is UDP-3-O-acylglucosamine N-acyltransferase (341 aa).

Histidine 239 acts as the Proton acceptor in catalysis.

Belongs to the transferase hexapeptide repeat family. LpxD subfamily. In terms of assembly, homotrimer.

It carries out the reaction a UDP-3-O-[(3R)-3-hydroxyacyl]-alpha-D-glucosamine + a (3R)-hydroxyacyl-[ACP] = a UDP-2-N,3-O-bis[(3R)-3-hydroxyacyl]-alpha-D-glucosamine + holo-[ACP] + H(+). Its pathway is bacterial outer membrane biogenesis; LPS lipid A biosynthesis. Functionally, catalyzes the N-acylation of UDP-3-O-acylglucosamine using 3-hydroxyacyl-ACP as the acyl donor. Is involved in the biosynthesis of lipid A, a phosphorylated glycolipid that anchors the lipopolysaccharide to the outer membrane of the cell. This is UDP-3-O-acylglucosamine N-acyltransferase from Photobacterium profundum (strain SS9).